Here is a 167-residue protein sequence, read N- to C-terminus: General odorant-binding protein 1 (167 aa).

The first 22 residues, 1–22 (MAHTLQTVVLLLGTSILHPILA), serve as a signal peptide directing secretion. 3 cysteine pairs are disulfide-bonded: Cys41–Cys76, Cys72–Cys130, and Cys119–Cys139.

The protein belongs to the PBP/GOBP family. In terms of tissue distribution, antenna.

Present in the aqueous fluid surrounding olfactory sensory dendrites and are thought to aid in the capture and transport of hydrophobic odorants into and through this fluid. The sequence is that of General odorant-binding protein 1 from Antheraea pernyi (Chinese oak silk moth).